Reading from the N-terminus, the 229-residue chain is Uracil-DNA glycosylase (229 aa).

D67 functions as the Proton acceptor in the catalytic mechanism.

The protein belongs to the uracil-DNA glycosylase (UDG) superfamily. UNG family.

It localises to the cytoplasm. The enzyme catalyses Hydrolyzes single-stranded DNA or mismatched double-stranded DNA and polynucleotides, releasing free uracil.. Excises uracil residues from the DNA which can arise as a result of misincorporation of dUMP residues by DNA polymerase or due to deamination of cytosine. This chain is Uracil-DNA glycosylase, found in Coxiella burnetii (strain CbuG_Q212) (Coxiella burnetii (strain Q212)).